A 742-amino-acid polypeptide reads, in one-letter code: MSLLLEPSKEQIKEEKLYQQMGVSDDEFALIESILGRLPNYTEIGIFSVMWSEHCSYKNSKPILRKFPTSGERVLQGPGEGAGIVDIGDNQAVVFKIESHNHPSALEPYQGAATGVGGIIRDVFSMGARPIAVLNSLRFGELTSPRVKYLFEEVVAGIAGYGNCIGIPTVGGEVQFDSSYEGNPLVNAMCVGLINHEDIKKGQAKGVGNTVMYVGAKTGRDGIHGATFASEEMSDSSEEKRSAVQVGDPFMEKLLLEACLEVIQCDALVGIQDMGAAGLTSSSAEMASKAGSGIEMNLDLIPQRETGMTAYEMMLSESQERMLLVIERGREQEIIDIFDKYDLEAVSVGHVTDDKMLRLTHKGEVVCELPVDALAEEAPVYHKPSQEPAYYREFLETDVPAPQIEDANEMLKALLQQPTIASKEWVYDQYDYMVRTNTVVAPGSDAGVLRIRGTKKALAMTTDCNARYLYLDPEVGGKIAVAEAARNIICSGAEPLAVTDNLNFGNPEKPEIFWQIEKAADGISEACNVLSTPVIGGNVSLYNESNGTAIYPTPVIGMVGLIEDTAHITTQHFKQAGDLVYVIGETKPEFAGSELQKMTEGRIYGKAPQIDLDVELSRQKALLDAIKKGFVQSAHDVSEGGLGVAIAESVMTTENLGANVTVEGEAALLFSESQSRFVVSVKKEHQAAFEATVKDAVHIGEVTADGILAIQNQDGQQMIHAQTKELERVWKGAIPCLLKSKA.

Residue H54 is part of the active site. 2 residues coordinate ATP: Y57 and K96. A Mg(2+)-binding site is contributed by E98. Residues 99–102 and R121 each bind substrate; that span reads SHNH. The active-site Proton acceptor is H100. D122 is a binding site for Mg(2+). 2 residues coordinate substrate: G225 and Q245. D273 lines the Mg(2+) pocket. 317-319 provides a ligand contact to substrate; sequence ESQ. G537 is an ATP binding site. Residue N538 coordinates Mg(2+). S540 contacts substrate.

It belongs to the FGAMS family. Monomer. Part of the FGAM synthase complex composed of 1 PurL, 1 PurQ and 2 PurS subunits.

The protein localises to the cytoplasm. The enzyme catalyses N(2)-formyl-N(1)-(5-phospho-beta-D-ribosyl)glycinamide + L-glutamine + ATP + H2O = 2-formamido-N(1)-(5-O-phospho-beta-D-ribosyl)acetamidine + L-glutamate + ADP + phosphate + H(+). It carries out the reaction L-glutamine + H2O = L-glutamate + NH4(+). It participates in purine metabolism; IMP biosynthesis via de novo pathway; 5-amino-1-(5-phospho-D-ribosyl)imidazole from N(2)-formyl-N(1)-(5-phospho-D-ribosyl)glycinamide: step 1/2. Functionally, part of the phosphoribosylformylglycinamidine synthase complex involved in the purines biosynthetic pathway. Catalyzes the ATP-dependent conversion of formylglycinamide ribonucleotide (FGAR) and glutamine to yield formylglycinamidine ribonucleotide (FGAM) and glutamate. The FGAM synthase complex is composed of three subunits. PurQ produces an ammonia molecule by converting glutamine to glutamate. PurL transfers the ammonia molecule to FGAR to form FGAM in an ATP-dependent manner. PurS interacts with PurQ and PurL and is thought to assist in the transfer of the ammonia molecule from PurQ to PurL. This Bacillus subtilis (strain 168) protein is Phosphoribosylformylglycinamidine synthase subunit PurL.